Reading from the N-terminus, the 282-residue chain is MTIQWFPGHMAKARREVTEKLKLIDIVYELVDARIPMSSRNPMIEDILKNKPRIMLLNKADKADAAVTQQWKEHFENQGIRSLSINSVNGQGLNQIVPASKEILQEKFDRMRAKGVKPRAIRALIIGIPNVGKSTLINRLAKKNIAKTGDRPGITTSQQWVKVGKELELLDTPGILWPKFEDELVGLRLAVTGAIKDSIINLQDVAVFGLRFLEEHYPERLKERYALDEIPEDIAELFDAIGEKRGCLMSGGLINYDKTTEVIIRDIRTEKFGRLSFEQPTM.

Residues 14–178 (RREVTEKLKL…LLDTPGILWP (165 aa)) enclose the CP-type G domain. Residues 58 to 61 (NKAD), 86 to 87 (NS), 130 to 135 (NVGKST), and Gly174 contribute to the GTP site.

Belongs to the TRAFAC class YlqF/YawG GTPase family. MTG1 subfamily. Interacts with ctc. Interacts with the immature 50S ribosome subunit. 2 molecules of rbgA bind to one 50S subunit.

It localises to the cytoplasm. Essential protein that is required for a late step of 50S ribosomal subunit assembly. Has GTPase activity that is stimulated by interaction with the immature 50S ribosome subunit. Binds to the 23S rRNA. Required for the association of ribosomal proteins rplP and rpmA with the large subunit. The chain is Ribosome biogenesis GTPase A (rbgA) from Bacillus spizizenii (strain ATCC 23059 / NRRL B-14472 / W23) (Bacillus subtilis subsp. spizizenii).